Here is an 89-residue protein sequence, read N- to C-terminus: Small ribosomal subunit protein uS15 (89 aa).

Belongs to the universal ribosomal protein uS15 family. In terms of assembly, part of the 30S ribosomal subunit. Forms a bridge to the 50S subunit in the 70S ribosome, contacting the 23S rRNA.

Its function is as follows. One of the primary rRNA binding proteins, it binds directly to 16S rRNA where it helps nucleate assembly of the platform of the 30S subunit by binding and bridging several RNA helices of the 16S rRNA. Functionally, forms an intersubunit bridge (bridge B4) with the 23S rRNA of the 50S subunit in the ribosome. This chain is Small ribosomal subunit protein uS15, found in Lacticaseibacillus casei (strain BL23) (Lactobacillus casei).